We begin with the raw amino-acid sequence, 166 residues long: Phospholipase A2 inhibitor CgMIP-II (166 aa).

An N-terminal signal peptide occupies residues 1–19 (MRLILLSGLLLLGTFLANG). Residues 46-161 (LRYALMTVHN…CDDNLLVVCE (116 aa)) form the C-type lectin domain. 2 disulfides stabilise this stretch: C83–C160 and C138–C152. N-linked (GlcNAc...) asparagine glycosylation occurs at N122.

The protein belongs to the alpha-type phospholipase A2 inhibitor family. In terms of assembly, homomer composed of 20-25-kDa subunits that form oligomers of 180 kDa. In terms of processing, N-glycosylated. The glycosidic chain may contain superficial sialic acid residues. As to expression, expressed by the liver.

The protein resides in the secreted. Functionally, selectively inhibits the toxic properties of myotoxin-II from the same venom (AC P81165). Does not inhibit PLA2, anti-coagulant and lethal activities of the basic myotoxin I from the same venom (AC P0DQP6), nor the different crotoxin forms (heterodimer or subunit B alone). Does not block the enzymatic activity of crude acidic PLA2 fractions from the same venom. The polypeptide is Phospholipase A2 inhibitor CgMIP-II (Cerrophidion godmani (Porthidium godmani)).